The following is a 580-amino-acid chain: Fumarate hydratase class I, aerobic (580 aa).

The [4Fe-4S] cluster site is built by C105, C224, and C318.

It belongs to the class-I fumarase family. In terms of assembly, homodimer. [4Fe-4S] cluster is required as a cofactor.

It carries out the reaction (S)-malate = fumarate + H2O. The catalysed reaction is oxaloacetate = enol-oxaloacetate. It participates in carbohydrate metabolism; tricarboxylic acid cycle; (S)-malate from fumarate: step 1/1. Catalyzes the reversible hydration of fumarate to (S)-malate. Functions as an aerobic enzyme in the direction of malate formation as part of the citric acid cycle. Accounts for about 80% of the fumarase activity when the bacteria grow aerobically. To a lesser extent, also displays D-tartrate dehydratase activity in vitro, but is not able to convert (R)-malate, L-tartrate or meso-tartrate. Can also catalyze the isomerization of enol- to keto-oxaloacetate. The protein is Fumarate hydratase class I, aerobic of Salmonella typhimurium (strain LT2 / SGSC1412 / ATCC 700720).